The sequence spans 623 residues: uncharacterized protein (623 aa).

Over residues Leu-157 to Gln-166 the composition is skewed to basic and acidic residues. Residues Leu-157–Ile-237 are disordered. The segment covering Glu-167–Leu-177 has biased composition (polar residues). Over residues Ala-193–Ala-210 the composition is skewed to low complexity.

This is an uncharacterized protein from Macaca fascicularis (Crab-eating macaque).